The sequence spans 152 residues: Cytochrome c-type biogenesis protein CcmE 2 (152 aa).

Residues 1 to 8 lie on the Cytoplasmic side of the membrane; the sequence is MNPQRRRR. The chain crosses the membrane as a helical; Signal-anchor for type II membrane protein span at residues 9-29; that stretch reads LWLVLALVLAGGLATTLVAMA. Topologically, residues 30–152 are periplasmic; sequence LQRNVAYLYT…HQVAPAKVTQ (123 aa). Heme is bound by residues His123 and Tyr127.

The protein belongs to the CcmE/CycJ family.

Its subcellular location is the cell inner membrane. In terms of biological role, heme chaperone required for the biogenesis of c-type cytochromes. Transiently binds heme delivered by CcmC and transfers the heme to apo-cytochromes in a process facilitated by CcmF and CcmH. This chain is Cytochrome c-type biogenesis protein CcmE 2, found in Xanthomonas campestris pv. campestris (strain 8004).